The following is a 674-amino-acid chain: Kinesin-like protein KIFC1 (674 aa).

Phosphoserine is present on residues S28, S33, and S35. The segment at 66–96 (TSRPRGPLLSTVSQTQGHTAAQKGPKKTGPR) is disordered. The segment covering 75–84 (STVSQTQGHT) has biased composition (polar residues). Residues 146-315 (DLNEELKRYR…QELKGNIRVF (170 aa)) adopt a coiled-coil conformation. The 354-residue stretch at 311 to 664 (NIRVFCRVRP…LRFASKVNQC (354 aa)) folds into the Kinesin motor domain. Residues 327-366 (TPSPGFLVFPPGPAGPSDPPTGLSLSRSDDRRSTLTGAPA) are disordered. Residues 336–345 (PPGPAGPSDP) are compositionally biased toward pro residues. T360 carries the phosphothreonine modification. 411-418 (GQTGSGKT) lines the ATP pocket.

The protein belongs to the TRAFAC class myosin-kinesin ATPase superfamily. Kinesin family. NCD subfamily. As to quaternary structure, binds NUBP1 and NUBP2. Interacts with PPP1R42. Highly expressed in 14 dpc embryos, spleen and NIH3T3 cells. Also expressed in testis, brain, lung, kidney and cultured astrocytes. Very low levels in skeletal muscle and heart.

The protein resides in the nucleus. Its subcellular location is the cytoplasm. The protein localises to the cytoskeleton. It is found in the microtubule organizing center. It localises to the centrosome. The protein resides in the spindle. Its subcellular location is the early endosome. In terms of biological role, minus end-directed microtubule-dependent motor required for bipolar spindle formation. May contribute to movement of early endocytic vesicles. Regulates cilium formation and structure. The polypeptide is Kinesin-like protein KIFC1 (Mus musculus (Mouse)).